The primary structure comprises 247 residues: 2,3-bisphosphoglycerate-dependent phosphoglycerate mutase (247 aa).

Substrate is bound by residues 8 to 15 (RHGESTWN), 21 to 22 (TG), Arg-60, 87 to 90 (ERHY), Lys-98, 114 to 115 (RR), and 183 to 184 (GN). The active-site Tele-phosphohistidine intermediate is the His-9. The Proton donor/acceptor role is filled by Glu-87.

The protein belongs to the phosphoglycerate mutase family. BPG-dependent PGAM subfamily. As to quaternary structure, homodimer.

The enzyme catalyses (2R)-2-phosphoglycerate = (2R)-3-phosphoglycerate. It functions in the pathway carbohydrate degradation; glycolysis; pyruvate from D-glyceraldehyde 3-phosphate: step 3/5. In terms of biological role, catalyzes the interconversion of 2-phosphoglycerate and 3-phosphoglycerate. The protein is 2,3-bisphosphoglycerate-dependent phosphoglycerate mutase of Delftia acidovorans (strain DSM 14801 / SPH-1).